The sequence spans 402 residues: uncharacterized protein (402 aa).

12 consecutive transmembrane segments (helical) span residues 23–43, 52–72, 90–110, 121–141, 158–178, 180–200, 228–248, 255–275, 282–302, 309–329, 351–371, and 375–395; these read IVSV…PLAV, LGYG…ATLL, VLYG…SVAI, LLVG…AAIG, WNGI…VLLV, WLGL…GFAL, GMGL…ITLY, ANAV…RLLF, LGGF…LLLL, WVGL…FPAF, LFVD…ANLF, and SMFL…IALH.

This sequence belongs to the major facilitator superfamily. YhhS family.

It is found in the cell inner membrane. This is an uncharacterized protein from Pseudomonas aeruginosa (strain UCBPP-PA14).